We begin with the raw amino-acid sequence, 604 residues long: Netrin-1 (604 aa).

The first 24 residues, 1-24 (MMRAVWEALAALAAVACLVGAVRG), serve as a signal peptide directing secretion. The region spanning 47-284 (HPRRCIPDFV…AVSDLQVGGR (238 aa)) is the Laminin N-terminal domain. Residues Asn-95, Asn-116, and Asn-131 are each glycosylated (N-linked (GlcNAc...) asparagine). Cystine bridges form between Cys-119–Cys-152, Cys-285–Cys-294, Cys-287–Cys-304, Cys-306–Cys-315, Cys-318–Cys-338, Cys-341–Cys-350, Cys-343–Cys-368, Cys-371–Cys-380, Cys-383–Cys-401, Cys-404–Cys-416, Cys-406–Cys-423, Cys-425–Cys-434, Cys-437–Cys-451, Cys-472–Xaa-544, and Cys-491–Cys-601. 3 Laminin EGF-like domains span residues 285–340 (CKCN…ECVA), 341–403 (CNCN…ACKA), and 404–453 (CDCH…PCIK). Residue Asn-417 is glycosylated (N-linked (GlcNAc...) asparagine). The region spanning 472-601 (CDSYCKASKG…FQQREKKGKC (130 aa)) is the NTR domain. A Cell attachment site motif is present at residues 530–532 (RGD).

In terms of assembly, binds to its receptors; DCC, UNC5A, UNC5B, UNC5C and probably UNC5D. Binds to its receptor; DSCAM. Interacts with APP.

It is found in the secreted. Its subcellular location is the cytoplasm. Netrins control guidance of CNS commissural axons and peripheral motor axons. Its association with either DCC or some UNC5 receptors will lead to axon attraction or repulsion, respectively. Binding to UNC5C might cause dissociation of UNC5C from polymerized TUBB3 in microtubules and thereby lead to increased microtubule dynamics and axon repulsion. Involved in dorsal root ganglion axon projection towards the spinal cord. It also serves as a survival factor via its association with its receptors which prevent the initiation of apoptosis. Involved in colorectal tumorigenesis by regulating apoptosis. The chain is Netrin-1 (Ntn1) from Rattus norvegicus (Rat).